Consider the following 336-residue polypeptide: Speedy protein E1 (336 aa).

Positions 16 to 50 (GVDPSPPCRSLGWKRKREWSDESEEEPEKELAPEP) are disordered. Positions 36-50 (DESEEEPEKELAPEP) are enriched in acidic residues.

This sequence belongs to the Speedy/Ringo family. As to expression, predominantly expressed in testis and heart.

The sequence is that of Speedy protein E1 from Homo sapiens (Human).